Consider the following 337-residue polypeptide: MGNLISLIFCCGRRQRSNIPPAMETAPLELPPNRFVFAAVPPYLNPNPNYVDQYPGNCLPPPVTEPPMLPYNFNHLHHYPPNSYQLPHPLFHGGRYPILPPPTYVHQKAVTIRNDVNLKKKTLTLIPDPENPNRLLVSFTFDASMPGRITVVFFATEDAECNLRATKEDTLPPITFDFGEGLGQKFIQSSGTGIDLTAFKDSELFKEVDTDVFPLAVKAEATPAEEGKSGSTNVQITQVVYTKEKGEIKIEVVKQILWVNKRRYELLEIYGIENTVDGSDEGKECVVCLSEPRDTTVLPCRHMCMCSGCAKALRFQTNLCPVCRQPVEMLLEINKNG.

A lipid anchor (N-myristoyl glycine) is attached at G2. Residues 139–255 are DAR2 domain; the sequence is FTFDASMPGR…GEIKIEVVKQ (117 aa). The RING-type; atypical zinc finger occupies 285-324; it reads CVVCLSEPRDTTVLPCRHMCMCSGCAKALRFQTNLCPVCR.

It belongs to the RING-type zinc finger family. LOG2 subfamily. In terms of processing, myristoylated (in vitro).

It catalyses the reaction S-ubiquitinyl-[E2 ubiquitin-conjugating enzyme]-L-cysteine + [acceptor protein]-L-lysine = [E2 ubiquitin-conjugating enzyme]-L-cysteine + N(6)-ubiquitinyl-[acceptor protein]-L-lysine.. The protein operates within protein modification; protein ubiquitination. Acts as an E3 ubiquitin-protein ligase, or as part of E3 complex, which accepts ubiquitin from specific E2 ubiquitin-conjugating enzymes and then transfers it to substrates (in vitro). The chain is Probable E3 ubiquitin-protein ligase LUL1 (LUL1) from Arabidopsis thaliana (Mouse-ear cress).